Here is a 434-residue protein sequence, read N- to C-terminus: Probable G-protein coupled receptor B0563.6 (434 aa).

The N-linked (GlcNAc...) asparagine glycan is linked to N12. The next 2 helical transmembrane spans lie at 30-50 (VLPCICAIGIVGNITNLMVLA) and 65-85 (LAVADLLCMLFVLVFVSTEYL). N-linked (GlcNAc...) asparagine glycosylation is present at N88. A run of 2 helical transmembrane segments spans residues 105 to 125 (LMLTLINWALGAGVYVVVALS) and 147 to 167 (ATRAIVIAFLIPAIFYVPYAI). An N-linked (GlcNAc...) asparagine glycan is attached at N181. Helical transmembrane passes span 208 to 228 (ILRFLPIIILTVLNIQIMIAF) and 258 to 278 (GGTVLMSLVCNIPAAINLLLI). N-linked (GlcNAc...) asparagine glycosylation is found at N429 and N430.

It belongs to the G-protein coupled receptor 1 family.

The protein resides in the cell membrane. Not known. Putative receptor. This Caenorhabditis elegans protein is Probable G-protein coupled receptor B0563.6.